An 88-amino-acid polypeptide reads, in one-letter code: NADH-ubiquinone oxidoreductase chain 4L (88 aa).

2 helical membrane passes run 22 to 42 and 57 to 77; these read IILM…LVLV and IYII…LVAY.

It belongs to the complex I subunit 4L family.

It localises to the mitochondrion membrane. It catalyses the reaction a ubiquinone + NADH + 5 H(+)(in) = a ubiquinol + NAD(+) + 4 H(+)(out). In terms of biological role, core subunit of the mitochondrial membrane respiratory chain NADH dehydrogenase (Complex I) that is believed to belong to the minimal assembly required for catalysis. Complex I functions in the transfer of electrons from NADH to the respiratory chain. The immediate electron acceptor for the enzyme is believed to be ubiquinone. The sequence is that of NADH-ubiquinone oxidoreductase chain 4L (ND4L) from Trimorphomyces papilionaceus (Jelly fungus).